Consider the following 354-residue polypeptide: S-adenosylmethionine:tRNA ribosyltransferase-isomerase (354 aa).

It belongs to the QueA family. Monomer.

Its subcellular location is the cytoplasm. It carries out the reaction 7-aminomethyl-7-carbaguanosine(34) in tRNA + S-adenosyl-L-methionine = epoxyqueuosine(34) in tRNA + adenine + L-methionine + 2 H(+). The protein operates within tRNA modification; tRNA-queuosine biosynthesis. Its function is as follows. Transfers and isomerizes the ribose moiety from AdoMet to the 7-aminomethyl group of 7-deazaguanine (preQ1-tRNA) to give epoxyqueuosine (oQ-tRNA). This is S-adenosylmethionine:tRNA ribosyltransferase-isomerase from Azorhizobium caulinodans (strain ATCC 43989 / DSM 5975 / JCM 20966 / LMG 6465 / NBRC 14845 / NCIMB 13405 / ORS 571).